The sequence spans 587 residues: Capsid vertex component 2 (587 aa).

Residues 1-53 are interaction with major capsid protein/MCP; it reads MAEYVNYVLGSLYVSDTATSTIPTDVRNFIAPPFPLNFWSGPTFTVSSNTRAD. The disordered stretch occupies residues 113–132; that stretch reads SADAATPQVNASEADQRPDN.

This sequence belongs to the herpesviridae CVC2 protein family. Heterodimerizes with CVC1. Interacts with major capsid protein/MCP and triplex capsid protein 1/TRX1 at the pentamer vertices. Interacts with the large tegument protein/LTP.

It localises to the virion. The protein localises to the host nucleus. Its function is as follows. Capsid vertex-specific component that plays a role during viral DNA encapsidation, assuring correct genome cleavage and presumably stabilizing capsids that contain full-length viral genomes. Participates in the interaction between the capsid and the tegument through interaction with the large tegument protein/LTP. The chain is Capsid vertex component 2 from Equine herpesvirus 1 (strain Ab4p) (EHV-1).